The following is a 322-amino-acid chain: Transcription factor Atoh8 (322 aa).

Disordered stretches follow at residues 77-96 (PVPA…DTAR), 101-144 (IRAP…EAHS), and 159-221 (PPAR…ATAA). The segment covering 101–111 (IRAPEVSDARK) has biased composition (basic and acidic residues). Residues 231 to 244 (TRRLLANARERTRV) are basic motif; degenerate. In terms of domain architecture, bHLH spans 231–283 (TRRLLANARERTRVHTISAAFEALRKQVPCYSYGQKLSKLAILRIACNYILSL). The tract at residues 245–283 (HTISAAFEALRKQVPCYSYGQKLSKLAILRIACNYILSL) is helix-loop-helix motif.

In terms of assembly, efficient DNA binding requires dimerization with another bHLH protein. Interacts with NEUROG3 and NEUROD1. Interacts with ZFPM2; mediates indirect interaction with GATA4. Forms a heterodimer with TCF3; repress transcription of TCF3 and TCF3/NEUROG3 dimer-induced transactivation of E box-dependent promoters. As to expression, expressed by subsets of mature neurons. Expressed in kidney (podocytes). Expression is restricted to the atria, lung mesenchyme, and vascular smooth muscle.

It is found in the nucleus. The protein localises to the nucleus speckle. It localises to the cytoplasm. Its function is as follows. Transcription factor that binds a palindromic (canonical) core consensus DNA sequence 5'-CANNTG- 3' known as an E-box element, possibly as a heterodimer with other bHLH proteins. Regulates endothelial cell proliferation, migration and tube-like structures formation. Modulates endothelial cell differentiation through NOS3. May be implicated in specification and differentiation of neuronal cell lineages in the brain. May participate in kidney development and may be involved in podocyte differentiation. During early embryonic development is involved in tissue-specific differentiation processes that are dependent on class II bHLH factors and namely modulates the differentiation program initiated by the pro-endocrine factor NEUROG3. During myogenesis, may play a role during the transition of myoblasts from the proliferative phase to the differentiation phase. Positively regulates HAMP transcription in two ways, firstly by acting directly on the HAMP promoter via E-boxes binding and indirectly through increased phosphorylation of SMAD protein complex. Repress NEUROG3-dependent gene activation in a gene-specific manner through at least two mechanisms; requires only either the sequestering of a general partner such as TCF3 through heterodimerization, either also requires binding of the bHLH domain to DNA via a basic motif. The chain is Transcription factor Atoh8 from Mus musculus (Mouse).